Here is a 182-residue protein sequence, read N- to C-terminus: Putative manganese efflux pump MntP 2 (182 aa).

Transmembrane regions (helical) follow at residues 2–22, 37–57, 63–83, 104–123, 127–149, and 162–182; these read IELT…SIAL, AGGF…YLGV, IGGI…LKMI, LLLL…LTLT, LPLW…GGVH, and AEYL…IEHS.

Belongs to the MntP (TC 9.B.29) family.

It is found in the cell inner membrane. In terms of biological role, probably functions as a manganese efflux pump. This chain is Putative manganese efflux pump MntP 2, found in Wolinella succinogenes (strain ATCC 29543 / DSM 1740 / CCUG 13145 / JCM 31913 / LMG 7466 / NCTC 11488 / FDC 602W) (Vibrio succinogenes).